The primary structure comprises 389 residues: Probable peptidoglycan glycosyltransferase FtsW (389 aa).

The Cytoplasmic portion of the chain corresponds to 1-14 (MPIRDWRQQSQRWP). A helical transmembrane segment spans residues 15-35 (IDYWLIGALAILITLGLTMVA). The Periplasmic portion of the chain corresponds to 36-57 (SSSIAISEKRFGDPTHYLLRQM). A helical membrane pass occupies residues 58-78 (FSMGLGLMAAYIVLKIPLSFW). Over 79-84 (RKHRGQ) the chain is Cytoplasmic. The chain crosses the membrane as a helical span at residues 85–105 (LFIVGLVLLVLVLVFGREING). Residues 106-111 (SKRWLP) are Periplasmic-facing. A helical transmembrane segment spans residues 112–132 (LVLMNFQVSEFMKIAVVVFMA). Residues 133–144 (GYLDRHATAVRE) lie on the Cytoplasmic side of the membrane. A helical transmembrane segment spans residues 145 to 165 (SFEAVIRLALPFGVMAILLLL). Residues 166 to 168 (EPD) are Periplasmic-facing. Residues 169–189 (FGSTFVIAVIITGMLLIAGAP) traverse the membrane as a helical segment. Over 190-191 (WR) the chain is Cytoplasmic. The helical transmembrane segment at 192 to 212 (FFVMTVLPIATLLVMMVITSP) threads the bilayer. Residues 213–268 (YRMARVTNFLDPWSDPFGNGYQLTQALIASGRGEWFGVGIGESVQKLLYLPDAHTD) lie on the Periplasmic side of the membrane. A helical membrane pass occupies residues 269–289 (FLFSIYAEEYGLIGVAFLALL). The Cytoplasmic segment spans residues 290-310 (YLTLLYRCFRIGRKAFNQTHY). The chain crosses the membrane as a helical span at residues 311–331 (FGGLIAYGVGIWIVLQAMINM). The Periplasmic segment spans residues 332–344 (GVNLGLFPTKGLT). A helical transmembrane segment spans residues 345–365 (LPFMSYGGSSVLMLFIGVAMV). Over 366–389 (LRVDLETRQAVLEHSVDESGQGKR) the chain is Cytoplasmic.

It belongs to the SEDS family. FtsW subfamily.

Its subcellular location is the cell inner membrane. It catalyses the reaction [GlcNAc-(1-&gt;4)-Mur2Ac(oyl-L-Ala-gamma-D-Glu-L-Lys-D-Ala-D-Ala)](n)-di-trans,octa-cis-undecaprenyl diphosphate + beta-D-GlcNAc-(1-&gt;4)-Mur2Ac(oyl-L-Ala-gamma-D-Glu-L-Lys-D-Ala-D-Ala)-di-trans,octa-cis-undecaprenyl diphosphate = [GlcNAc-(1-&gt;4)-Mur2Ac(oyl-L-Ala-gamma-D-Glu-L-Lys-D-Ala-D-Ala)](n+1)-di-trans,octa-cis-undecaprenyl diphosphate + di-trans,octa-cis-undecaprenyl diphosphate + H(+). The protein operates within cell wall biogenesis; peptidoglycan biosynthesis. Its function is as follows. Peptidoglycan polymerase that is essential for cell division. This is Probable peptidoglycan glycosyltransferase FtsW from Hydrogenovibrio crunogenus (strain DSM 25203 / XCL-2) (Thiomicrospira crunogena).